Consider the following 323-residue polypeptide: Serine acetyltransferase 2 (323 aa).

Positions 302–323 (AQSNGPSLSAGDTEKGHTNSTS) are disordered. The segment covering 313–323 (DTEKGHTNSTS) has biased composition (basic and acidic residues).

This sequence belongs to the transferase hexapeptide repeat family. As to quaternary structure, homomultimer. As to expression, ubiquitously expressed at low levels. Localized in vascular tissues, particularly in phloem.

It localises to the cytoplasm. The enzyme catalyses L-serine + acetyl-CoA = O-acetyl-L-serine + CoA. It participates in amino-acid biosynthesis; L-cysteine biosynthesis; L-cysteine from L-serine: step 1/2. This Arabidopsis thaliana (Mouse-ear cress) protein is Serine acetyltransferase 2.